The following is a 282-amino-acid chain: Putative 4-diphosphocytidyl-2-C-methyl-D-erythritol kinase (282 aa).

The active site involves Lys-9. 93–103 is a binding site for ATP; it reads PVSAGLAGGSA. Residue Asp-135 is part of the active site.

It belongs to the GHMP kinase family. IspE subfamily.

The enzyme catalyses 4-CDP-2-C-methyl-D-erythritol + ATP = 4-CDP-2-C-methyl-D-erythritol 2-phosphate + ADP + H(+). Catalyzes the phosphorylation of the position 2 hydroxy group of 4-diphosphocytidyl-2C-methyl-D-erythritol. This Staphylococcus aureus (strain bovine RF122 / ET3-1) protein is Putative 4-diphosphocytidyl-2-C-methyl-D-erythritol kinase.